A 427-amino-acid polypeptide reads, in one-letter code: Peptidase B (427 aa).

Positions 195 and 200 each coordinate Mn(2+). The active site involves lysine 207. Positions 218, 277, and 279 each coordinate Mn(2+). Residue arginine 281 is part of the active site.

It belongs to the peptidase M17 family. In terms of assembly, homohexamer. It depends on Mn(2+) as a cofactor.

The protein resides in the cytoplasm. The catalysed reaction is Release of an N-terminal amino acid, Xaa, from a peptide or arylamide. Xaa is preferably Glu or Asp but may be other amino acids, including Leu, Met, His, Cys and Gln.. Functionally, probably plays an important role in intracellular peptide degradation. This chain is Peptidase B, found in Escherichia coli (strain ATCC 8739 / DSM 1576 / NBRC 3972 / NCIMB 8545 / WDCM 00012 / Crooks).